We begin with the raw amino-acid sequence, 342 residues long: Trace amine-associated receptor 8 (342 aa).

Topologically, residues 1-31 are extracellular; it reads MTSNFSQPVVQLCYEDVNGSCIETPYSPGSR. Asn-4 and Asn-18 each carry an N-linked (GlcNAc...) asparagine glycan. Cystine bridges form between Cys-21–Cys-185 and Cys-104–Cys-189. Residues 32–52 traverse the membrane as a helical segment; it reads VILYTAFSFGSLLAVFGNLLV. Over 53-67 the chain is Cytoplasmic; it reads MTSVLHFKQLHSPTN. Residues 68 to 88 form a helical membrane-spanning segment; the sequence is FLIASLACADFLVGVTVMLFS. Residues 89 to 111 lie on the Extracellular side of the membrane; the sequence is MVRTVESCWYFGAKFCTLHSCCD. A helical transmembrane segment spans residues 112–132; that stretch reads VAFCYSSVLHLCFICIDRYIV. Over 133–146 the chain is Cytoplasmic; sequence VTDPLVYATKFTVS. A helical transmembrane segment spans residues 147–167; that stretch reads VSGICISVSWILPLTYSGAVF. The Extracellular segment spans residues 168–195; that stretch reads YTGVNDDGLEELVSALNCVGGCQIIVSQ. The helical transmembrane segment at 196 to 216 threads the bilayer; that stretch reads GWVLIDFLLFFIPTLVMIILY. Topologically, residues 217–258 are cytoplasmic; that stretch reads SKIFLIAKQQAIKIETTSSKVESSSESYKIRVAKRERKAAKT. Residues 259 to 279 traverse the membrane as a helical segment; it reads LGVTVLAFVISWLPYTVDILI. Asp-280 is a topological domain (extracellular). A helical transmembrane segment spans residues 281 to 301; the sequence is AFMGFLTPAYIYEICCWSAYY. Topologically, residues 302 to 342 are cytoplasmic; sequence NSAMNPLIYALFYPWFRKAIKLILSGDVLKASSSTISLFLE.

It belongs to the G-protein coupled receptor 1 family. As to expression, expressed in kidney and amygdala. Not expressed in other tissues or brain regions tested.

It localises to the cell membrane. Olfactory receptor specific for trace amines. Trace amine compounds are enriched in animal body fluids and act on trace amine-associated receptors (TAARs) to elicit both intraspecific and interspecific innate behaviors. Ligand-binding causes a conformation change that triggers signaling via G alpha proteins, possibly G(i)/G(o) G alpha proteins. The protein is Trace amine-associated receptor 8 (TAAR8) of Homo sapiens (Human).